The following is a 237-amino-acid chain: DCN1-like protein 5 (237 aa).

S9, S41, and S48 each carry phosphoserine. Residues 46–232 (FSSKKCLAWF…LLDEFVEWQK (187 aa)) enclose the DCUN1 domain.

Part of a complex that contains DCUN1D5, CUL1 and RBX1; this interaction is bridged by CUL1. Interacts (via the DCUN1 domain) with the unneddylated cullins: interacts with CUL1, CUL2, CUL3, CUL4A, CUL4B and CUL5; these interactions promote the cullin neddylation and the identity of the cullin dictates the affinity of the interaction. Interacts (via DCUN1 domain) with UBE2M (N-terminally acetylated form) and probably with UBE2F (N-terminally acetylated form). May also interact with regulators or subunits of cullin-RING ligases such as RBX1, RNF7, ELOB and DDB1; these interactions are bridged by cullins. Interacts with CAND1; this interaction is bridged by cullins and strongly inhibits the neddylation of cullins. These CAND-cullin-DCNL complexes can only be neddylated in the presence of a substrate adapter. Phosphorylation at Ser-41 is independent of cullin's interaction. Phosphorylated in response to both TICAM1 and MYD88 dependent Toll-like receptor (TLR) pathway activation. Phosphorylated in response to IL1B stimulation.

The protein localises to the nucleus. The protein resides in the cytoplasm. It localises to the cytoskeleton. It is found in the spindle. Its function is as follows. Contributes to the neddylation of all cullins by transferring NEDD8 from N-terminally acetylated NEDD8-conjugating E2s enzyme to different cullin C-terminal domain-RBX complexes which is necessary for the activation of cullin-RING E3 ubiquitin ligases (CRLs). May play a role in DNA damage response and may participate in cell proliferation and anchorage-independent cell growth. This Pongo abelii (Sumatran orangutan) protein is DCN1-like protein 5.